Consider the following 569-residue polypeptide: Peroxynitrite isomerase THAP4 (569 aa).

Residues 1-85 form a THAP-type zinc finger; that stretch reads MVICCAAVNC…LKPTAVPSIF (85 aa). The disordered stretch occupies residues 83 to 219; it reads SIFHLSEKKR…GISMDDFTPP (137 aa). Residues 121–130 are compositionally biased toward polar residues; sequence IGSSLSSSDN. A Phosphoserine modification is found at serine 159. Residues 196–210 are compositionally biased toward low complexity; it reads ASSSAADAGGADKSG. Positions 230–233 match the HCFC1-binding motif (HBM) motif; sequence LHSY. Phosphoserine is present on serine 234. Residues 235-312 are disordered; that stretch reads FSSKHTRERP…EAVQSEHSDA (78 aa). Basic and acidic residues predominate over residues 242–262; sequence ERPSVPREPMDRKRLKRDIEP. Polar residues predominate over residues 265–279; that stretch reads SGNSVAQSPPSSSLT. Over residues 280–289 the composition is skewed to low complexity; that stretch reads ATPQKASQSP. Residues 407-569 are nitrobindin; it reads PPKLNPVVEP…LHITYKKVTP (163 aa). Positions 436 and 559 each coordinate heme b.

This sequence in the C-terminal section; belongs to the nitrobindin family. Homodimer. Heme b is required as a cofactor.

It localises to the cytoplasm. The protein resides in the nucleus. The enzyme catalyses peroxynitrite = nitrate. Its pathway is nitrogen metabolism. In terms of biological role, heme-binding protein able to scavenge peroxynitrite and to protect free L-tyrosine against peroxynitrite-mediated nitration, by acting as a peroxynitrite isomerase that converts peroxynitrite to nitrate. Therefore, this protein likely plays a role in peroxynitrite sensing and in the detoxification of reactive nitrogen and oxygen species (RNS and ROS, respectively). Is able to bind nitric oxide (NO) in vitro, but may act as a sensor of peroxynitrite levels in vivo, possibly modulating the transcriptional activity residing in the N-terminal region. This chain is Peroxynitrite isomerase THAP4, found in Rattus norvegicus (Rat).